We begin with the raw amino-acid sequence, 300 residues long: Ribonuclease HIII (300 aa).

Residues 83–300 (IPIIGSDEVG…THKAQALLTK (218 aa)) enclose the RNase H type-2 domain. A divalent metal cation-binding residues include Asp89, Glu90, and Asp194.

This sequence belongs to the RNase HII family. RnhC subfamily. It depends on Mn(2+) as a cofactor. Mg(2+) is required as a cofactor.

It localises to the cytoplasm. The catalysed reaction is Endonucleolytic cleavage to 5'-phosphomonoester.. Endonuclease that specifically degrades the RNA of RNA-DNA hybrids. In Streptococcus pyogenes serotype M49 (strain NZ131), this protein is Ribonuclease HIII.